The primary structure comprises 458 residues: MYRRLASGLYQTSQRRIAQVQPKSVFVPETIVTTLPNGFRVATENTGGSTATIGVFIDAGSRYENEKNNGTAHFLEHMAFKGTPRRTRMGLELEVENIGAHLNAYTSRESTTYYAKCFTEKLDQSVDILSDILLNSSLATKDIEAERGVIIREMEEVAQNFQEVVFDILHADVFKGNPLSYTILGPIELIQTINKNDLQGYINTHYRSGRMVLAAAGGVNHDAIVKMAEKYFGELKHGDSSTEFVPATYSPCEVRGDIPDLPMLYGAMVVEGVSWTHEDNLALMVANTLMGEYDRMRGFGVNAPTRLAEKLSQDAGIEVFQSFNTCYKETGLVGTYFVAAPESIDNLIDSVLQQWVWLANNIDEAAVDRAKRSLHTNLLLMLDGSTPVCEDIGRQLLCYGRRIPTPELHARIESITVQQLRDVCRRVFLEGQVSAAVVGKTQYWPVNEEIHGRLIRMQ.

The transit peptide at 1-41 (MYRRLASGLYQTSQRRIAQVQPKSVFVPETIVTTLPNGFRV) directs the protein to the mitochondrion. His-73 is a Zn(2+) binding site. The active-site Proton acceptor is the Glu-76. Residues His-77 and Glu-153 each contribute to the Zn(2+) site.

The protein belongs to the peptidase M16 family. As to quaternary structure, heterodimer of mppa-1 (alpha) and mppb-1 (beta) subunits, forming the mitochondrial processing protease (MPP) in which mppa-1 is involved in substrate recognition and binding and mppb-1 is the catalytic subunit. It depends on Zn(2+) as a cofactor.

The protein resides in the mitochondrion matrix. It catalyses the reaction Release of N-terminal transit peptides from precursor proteins imported into the mitochondrion, typically with Arg in position P2.. Its activity is regulated as follows. Binding to mppa-1 is required for catalytic activity. Inhibited by metal chelator ethylenediaminetetraacetic acid (EDTA). Its function is as follows. Catalytic subunit of the essential mitochondrial processing protease (MPP), which cleaves the mitochondrial sequence off newly imported precursors proteins. Preferentially, cleaves after an arginine at position P2. The polypeptide is Mitochondrial-processing peptidase subunit beta (Caenorhabditis elegans).